Reading from the N-terminus, the 192-residue chain is Pyridoxal 5'-phosphate synthase subunit PdxT (192 aa).

53 to 55 (GES) serves as a coordination point for L-glutamine. C82 functions as the Nucleophile in the catalytic mechanism. L-glutamine is bound by residues R108 and 134 to 135 (IR). Active-site charge relay system residues include H170 and E172.

This sequence belongs to the glutaminase PdxT/SNO family. In terms of assembly, in the presence of PdxS, forms a dodecamer of heterodimers. Only shows activity in the heterodimer.

The catalysed reaction is aldehydo-D-ribose 5-phosphate + D-glyceraldehyde 3-phosphate + L-glutamine = pyridoxal 5'-phosphate + L-glutamate + phosphate + 3 H2O + H(+). It catalyses the reaction L-glutamine + H2O = L-glutamate + NH4(+). The protein operates within cofactor biosynthesis; pyridoxal 5'-phosphate biosynthesis. Functionally, catalyzes the hydrolysis of glutamine to glutamate and ammonia as part of the biosynthesis of pyridoxal 5'-phosphate. The resulting ammonia molecule is channeled to the active site of PdxS. This is Pyridoxal 5'-phosphate synthase subunit PdxT from Methanothermobacter thermautotrophicus (strain ATCC 29096 / DSM 1053 / JCM 10044 / NBRC 100330 / Delta H) (Methanobacterium thermoautotrophicum).